Consider the following 288-residue polypeptide: Nucleotide-binding protein AHA_3920 (288 aa).

8-15 (GRSGSGKT) contacts ATP. GTP is bound at residue 56–59 (DVRN).

Belongs to the RapZ-like family.

In terms of biological role, displays ATPase and GTPase activities. The chain is Nucleotide-binding protein AHA_3920 from Aeromonas hydrophila subsp. hydrophila (strain ATCC 7966 / DSM 30187 / BCRC 13018 / CCUG 14551 / JCM 1027 / KCTC 2358 / NCIMB 9240 / NCTC 8049).